A 243-amino-acid chain; its full sequence is uncharacterized protein (243 aa).

The chain crosses the membrane as a helical span at residues 55 to 75; that stretch reads IILIILLTIFMVISTLVIAFV.

The protein localises to the membrane. This is an uncharacterized protein from Rickettsia prowazekii (strain Madrid E).